We begin with the raw amino-acid sequence, 388 residues long: Dipeptidase verJ (388 aa).

Zn(2+) is bound by residues histidine 29, aspartate 31, and glutamate 142. Substrate contacts are provided by histidine 169, arginine 243, and aspartate 300.

This sequence belongs to the metallo-dependent hydrolases superfamily. Peptidase M19 family. Requires Zn(2+) as cofactor.

The catalysed reaction is an L-aminoacyl-L-amino acid + H2O = 2 an L-alpha-amino acid. The protein operates within mycotoxin biosynthesis. In terms of biological role, dipeptidase; part of the gene cluster that mediates the biosynthesis of 11'-deoxyverticillin A, one of the dimeric epipolythiodioxopiperazines (ETPs) from the verticillin family that act as mycotoxins. 11'-deoxyverticillin A is required for normal conidiation. The nonribosomal peptide synthetase verP is speculated to be responsible for condensation of amino acids to form the carbon skeleton of verticillin, whereas the cluster-specific tailoring enzymes are involved in further modifications leading to the production of 11'-deoxyverticillin A. The polypeptide is Dipeptidase verJ (Clonostachys rogersoniana).